We begin with the raw amino-acid sequence, 846 residues long: Aminopeptidase N (846 aa).

Substrate is bound by residues glutamate 120 and glycine 252–asparagine 256. Histidine 288 is a binding site for Zn(2+). Glutamate 289 functions as the Proton acceptor in the catalytic mechanism. The Zn(2+) site is built by histidine 292 and glutamate 311.

It belongs to the peptidase M1 family. Monomer. The cofactor is Zn(2+).

Its subcellular location is the cytoplasm. It carries out the reaction Release of an N-terminal amino acid, Xaa-|-Yaa- from a peptide, amide or arylamide. Xaa is preferably Ala, but may be most amino acids including Pro (slow action). When a terminal hydrophobic residue is followed by a prolyl residue, the two may be released as an intact Xaa-Pro dipeptide.. In terms of biological role, aminopeptidase with broad substrate specificity to several peptides. It has more affinity for oligopeptides than for dipeptides. It plays an essential role in the metabolism, it may be involved in nitrogen supply or protein turnover. This chain is Aminopeptidase N (pepN), found in Lactococcus lactis subsp. cremoris (strain MG1363).